The sequence spans 896 residues: Valine--tRNA ligase (896 aa).

Positions 43–53 (PNVTGSLHIGH) match the 'HIGH' region motif. Residues 545 to 549 (KMSKS) carry the 'KMSKS' region motif. Residue Lys-548 coordinates ATP. A coiled-coil region spans residues 831 to 857 (DLDAERARLAKGIAAAEKERDGLAARL).

The protein belongs to the class-I aminoacyl-tRNA synthetase family. ValS type 1 subfamily. As to quaternary structure, monomer.

It localises to the cytoplasm. The catalysed reaction is tRNA(Val) + L-valine + ATP = L-valyl-tRNA(Val) + AMP + diphosphate. Functionally, catalyzes the attachment of valine to tRNA(Val). As ValRS can inadvertently accommodate and process structurally similar amino acids such as threonine, to avoid such errors, it has a 'posttransfer' editing activity that hydrolyzes mischarged Thr-tRNA(Val) in a tRNA-dependent manner. The polypeptide is Valine--tRNA ligase (Rhizorhabdus wittichii (strain DSM 6014 / CCUG 31198 / JCM 15750 / NBRC 105917 / EY 4224 / RW1) (Sphingomonas wittichii)).